A 91-amino-acid polypeptide reads, in one-letter code: DNA-directed RNA polymerase subunit omega (91 aa).

It belongs to the RNA polymerase subunit omega family. In terms of assembly, the RNAP catalytic core consists of 2 alpha, 1 beta, 1 beta' and 1 omega subunit. When a sigma factor is associated with the core the holoenzyme is formed, which can initiate transcription.

It carries out the reaction RNA(n) + a ribonucleoside 5'-triphosphate = RNA(n+1) + diphosphate. Functionally, promotes RNA polymerase assembly. Latches the N- and C-terminal regions of the beta' subunit thereby facilitating its interaction with the beta and alpha subunits. This Proteus mirabilis (strain HI4320) protein is DNA-directed RNA polymerase subunit omega.